The primary structure comprises 524 residues: Cytochrome P450 6k1 (524 aa).

Residue C464 participates in heme binding.

Belongs to the cytochrome P450 family. Heme serves as cofactor.

Its subcellular location is the endoplasmic reticulum membrane. It is found in the microsome membrane. The protein is Cytochrome P450 6k1 (CYP6K1) of Blattella germanica (German cockroach).